Consider the following 124-residue polypeptide: Small ribosomal subunit protein uS12 (124 aa).

Asp89 is subject to 3-methylthioaspartic acid.

Belongs to the universal ribosomal protein uS12 family. In terms of assembly, part of the 30S ribosomal subunit. Contacts proteins S8 and S17. May interact with IF1 in the 30S initiation complex.

With S4 and S5 plays an important role in translational accuracy. Functionally, interacts with and stabilizes bases of the 16S rRNA that are involved in tRNA selection in the A site and with the mRNA backbone. Located at the interface of the 30S and 50S subunits, it traverses the body of the 30S subunit contacting proteins on the other side and probably holding the rRNA structure together. The combined cluster of proteins S8, S12 and S17 appears to hold together the shoulder and platform of the 30S subunit. This chain is Small ribosomal subunit protein uS12, found in Caldanaerobacter subterraneus subsp. tengcongensis (strain DSM 15242 / JCM 11007 / NBRC 100824 / MB4) (Thermoanaerobacter tengcongensis).